A 201-amino-acid chain; its full sequence is MAGKSSLFKIILLGDGGVGKSSLMNRYVTNKFDSQLFHTIGVEFLNKDLEVDGHFVTMQIWDTAGQERFRSLRTPFYRGSDCCLLTFSVDDSQSFQNLSNWKKEFIYYADVKEPESFPFVILGNKTDIKERQVSTEEAQAWCKDNGDYPYFETSAKDSTNVAAAFEEAVRRILATEDRSEHLIQTDTVNLHRKPKPNSSCC.

The residue at position 2 (Ala2) is an N-acetylalanine. Gly17, Val18, Gly19, Lys20, Ser21, Ser22, Asp33, Ser34, His38, and Thr39 together coordinate GTP. Ser21 serves as a coordination point for Mg(2+). A Switch 1 motif is present at residues 31–42 (KFDSQLFHTIGV). Ser34 is subject to Phosphoserine. Thr39 and Asp62 together coordinate Mg(2+). The short motif at 64–78 (AGQERFRSLRTPFYR) is the Switch 2 element. The GTP site is built by Gly65, Asn124, Lys125, Asp127, Ala155, and Lys156. The residue at position 179 (Ser179) is a Phosphoserine. Thr187 carries the phosphothreonine modification. S-geranylgeranyl cysteine attachment occurs at residues Cys200 and Cys201.

Belongs to the small GTPase superfamily. Rab family. In terms of assembly, interacts (preferentially in its GTP-bound form) with GCC2 (via its GRIP domain). Interacts (GTP-bound form) with SGSM1; the GDP-bound form has much lower affinity for SGSM1. Interacts with SGSM2. The GTP-bound form but not the GDP-bound form interacts with HPS4. The GTP-bound form but not the GDP-bound form interacts with BLOC-3 complex (heterodimer of HPS1 and HPS4) but does not interact with HPS1 alone. Interacts (GTP-bound form) with NDE1; two RAB9A-GTP molecules lie on the opposite sides of the NDE1 homodimer; the interaction leads to RAB9A-dynein motor tethering. Interacts (GTP-bound form) with NDEL1. Mg(2+) is required as a cofactor.

It is found in the cell membrane. Its subcellular location is the endoplasmic reticulum membrane. It localises to the golgi apparatus membrane. The protein localises to the late endosome. The protein resides in the cytoplasmic vesicle. It is found in the phagosome membrane. Its subcellular location is the phagosome. It localises to the cytoplasmic vesicle membrane. The protein localises to the melanosome. It catalyses the reaction GTP + H2O = GDP + phosphate + H(+). Regulated by guanine nucleotide exchange factors (GEFs) which promote the exchange of bound GDP for free GTP. Regulated by GTPase activating proteins (GAPs) which increase the GTP hydrolysis activity. Inhibited by GDP dissociation inhibitors (GDIs). In terms of biological role, the small GTPases Rab are key regulators of intracellular membrane trafficking, from the formation of transport vesicles to their fusion with membranes. Rabs cycle between an inactive GDP-bound form and an active GTP-bound form that is able to recruit to membranes different sets of downstream effectors directly responsible for vesicle formation, movement, tethering and fusion. RAB9A is involved in the transport of proteins between the endosomes and the trans-Golgi network (TGN). Specifically uses NDE1/NDEL1 as an effector to interact with the dynein motor complex in order to control retrograde trafficking of RAB9-associated late endosomes to the TGN. Involved in the recruitment of SGSM2 to melanosomes and is required for the proper trafficking of melanogenic enzymes TYR, TYRP1 and DCT/TYRP2 to melanosomes in melanocytes. This Mus musculus (Mouse) protein is Ras-related protein Rab-9A.